Here is a 307-residue protein sequence, read N- to C-terminus: Homoserine kinase (307 aa).

Pro-85–Ala-95 provides a ligand contact to ATP.

It belongs to the GHMP kinase family. Homoserine kinase subfamily.

It is found in the cytoplasm. The catalysed reaction is L-homoserine + ATP = O-phospho-L-homoserine + ADP + H(+). Its pathway is amino-acid biosynthesis; L-threonine biosynthesis; L-threonine from L-aspartate: step 4/5. Catalyzes the ATP-dependent phosphorylation of L-homoserine to L-homoserine phosphate. This Caldicellulosiruptor bescii (strain ATCC BAA-1888 / DSM 6725 / KCTC 15123 / Z-1320) (Anaerocellum thermophilum) protein is Homoserine kinase.